Here is a 171-residue protein sequence, read N- to C-terminus: Putative ankyrin repeat protein PA3287 (171 aa).

ANK repeat units lie at residues 48–77, 81–110, and 114–143; these read KGDSLLMLASYHGHADTVRLLLAYKADPDL, AGQTPLAGAAFKGDLAMVELLLAGGADVEG, and DGKTALMMAAMFNQAEVAASLLAHGARRDA.

In Pseudomonas aeruginosa (strain ATCC 15692 / DSM 22644 / CIP 104116 / JCM 14847 / LMG 12228 / 1C / PRS 101 / PAO1), this protein is Putative ankyrin repeat protein PA3287.